The sequence spans 300 residues: Tyrosine recombinase XerC (300 aa).

The Core-binding (CB) domain maps to 4 to 90 (VALSLDVSRF…ALRSFFDWLV (87 aa)). Residues 111–290 (HLPKNIDVDD…DFQHLASVYD (180 aa)) form the Tyr recombinase domain. Catalysis depends on residues arginine 150, lysine 174, histidine 242, arginine 245, and histidine 268. Tyrosine 277 acts as the O-(3'-phospho-DNA)-tyrosine intermediate in catalysis.

It belongs to the 'phage' integrase family. XerC subfamily. Forms a cyclic heterotetrameric complex composed of two molecules of XerC and two molecules of XerD, in which XerC interacts with XerD via its C-terminal region, XerD interacts with XerC via its C-terminal region and so on.

Its subcellular location is the cytoplasm. FtsK may regulate the catalytic switch between XerC and XerD in the heterotetrameric complex during the two steps of the recombination process. Functionally, site-specific tyrosine recombinase, which acts by catalyzing the cutting and rejoining of the recombining DNA molecules. Binds cooperatively to specific DNA consensus sequences that are separated from XerD binding sites by a short central region, forming the heterotetrameric XerC-XerD complex that recombines DNA substrates. The complex is essential to convert dimers of the bacterial chromosome into monomers to permit their segregation at cell division. It also contributes to the segregational stability of plasmids. In the complex XerC specifically exchanges the top DNA strands. This is Tyrosine recombinase XerC from Salmonella typhi.